A 211-amino-acid chain; its full sequence is PITH domain-containing protein CG6153 (211 aa).

In terms of domain architecture, PITH spans 20-192; sequence DHALEMGIEY…GVTICNYESR (173 aa).

This sequence belongs to the PITHD1 family.

The sequence is that of PITH domain-containing protein CG6153 from Drosophila melanogaster (Fruit fly).